A 427-amino-acid polypeptide reads, in one-letter code: Kallistatin (427 aa).

The signal sequence occupies residues 1–20; sequence MHLIDYLLLLLVGLLALSHG. N-linked (GlcNAc...) asparagine glycosylation is found at N33, N108, N157, and N238.

This sequence belongs to the serpin family. In terms of assembly, monomer and some homodimers.

It localises to the secreted. Its function is as follows. Inhibits human amidolytic and kininogenase activities of tissue kallikrein. The chain is Kallistatin (SERPINA4) from Pongo abelii (Sumatran orangutan).